A 265-amino-acid chain; its full sequence is RNA polymerase sigma factor SigI2 (265 aa).

A Polymerase core binding motif is present at residues 71–84; the sequence is DEFSVGLAAFNEAI. Positions 211–230 form a DNA-binding region, H-T-H motif; it reads KTELLKLLKINKKTIERNRT.

This sequence belongs to the sigma-70 factor family. SigI subfamily. Interacts with RsgI2.

It localises to the cytoplasm. Negatively regulated by the anti-sigma-I factor RsgI2. Binding of the polysaccharide substrate to RsgI2 may lead to the release and activation of SigI2. Its function is as follows. Sigma factors are initiation factors that promote the attachment of RNA polymerase to specific initiation sites and are then released. This sigma factor is involved in regulation of cellulosomal genes via an external polysaccharide-sensing mechanism. The polypeptide is RNA polymerase sigma factor SigI2 (Acetivibrio thermocellus (strain ATCC 27405 / DSM 1237 / JCM 9322 / NBRC 103400 / NCIMB 10682 / NRRL B-4536 / VPI 7372) (Clostridium thermocellum)).